The primary structure comprises 295 residues: Glutamyl-Q tRNA(Asp) synthetase (295 aa).

L-glutamate is bound by residues 6–10 and Glu42; that span reads RFAPS. The 'HIGH' region signature appears at 9-19; sequence PSPTGAMHLGN. Residues Cys93, Cys95, Tyr118, and Cys122 each contribute to the Zn(2+) site. Residues Tyr177 and Arg195 each contribute to the L-glutamate site. Residues 233–237 carry the 'KMSKS' region motif; sequence RLAKR. Residue Lys236 participates in ATP binding.

It belongs to the class-I aminoacyl-tRNA synthetase family. GluQ subfamily. Zn(2+) serves as cofactor.

Its function is as follows. Catalyzes the tRNA-independent activation of glutamate in presence of ATP and the subsequent transfer of glutamate onto a tRNA(Asp). Glutamate is transferred on the 2-amino-5-(4,5-dihydroxy-2-cyclopenten-1-yl) moiety of the queuosine in the wobble position of the QUC anticodon. The polypeptide is Glutamyl-Q tRNA(Asp) synthetase (Deinococcus radiodurans (strain ATCC 13939 / DSM 20539 / JCM 16871 / CCUG 27074 / LMG 4051 / NBRC 15346 / NCIMB 9279 / VKM B-1422 / R1)).